Here is a 92-residue protein sequence, read N- to C-terminus: Small ribosomal subunit protein uS19 (92 aa).

Functionally, protein S19 forms a complex with S13 that binds strongly to the 16S ribosomal RNA. This Rhodopseudomonas palustris (strain ATCC BAA-98 / CGA009) protein is Small ribosomal subunit protein uS19.